Reading from the N-terminus, the 620-residue chain is 1-deoxy-D-xylulose-5-phosphate synthase (620 aa).

Residues His-80 and 121-123 (GHS) each bind thiamine diphosphate. Asp-152 is a binding site for Mg(2+). Residues 153-154 (GA), Asn-181, Tyr-288, and Glu-370 each bind thiamine diphosphate. Mg(2+) is bound at residue Asn-181.

It belongs to the transketolase family. DXPS subfamily. Homodimer. Mg(2+) is required as a cofactor. Requires thiamine diphosphate as cofactor.

The enzyme catalyses D-glyceraldehyde 3-phosphate + pyruvate + H(+) = 1-deoxy-D-xylulose 5-phosphate + CO2. It participates in metabolic intermediate biosynthesis; 1-deoxy-D-xylulose 5-phosphate biosynthesis; 1-deoxy-D-xylulose 5-phosphate from D-glyceraldehyde 3-phosphate and pyruvate: step 1/1. Functionally, catalyzes the acyloin condensation reaction between C atoms 2 and 3 of pyruvate and glyceraldehyde 3-phosphate to yield 1-deoxy-D-xylulose-5-phosphate (DXP). This is 1-deoxy-D-xylulose-5-phosphate synthase from Klebsiella pneumoniae (strain 342).